We begin with the raw amino-acid sequence, 434 residues long: UDP-N-acetylglucosamine 1-carboxyvinyltransferase (434 aa).

Residue 22–23 participates in phosphoenolpyruvate binding; it reads KN. A UDP-N-acetyl-alpha-D-glucosamine-binding site is contributed by Arg97. Asp121 functions as the Proton donor in the catalytic mechanism. Residues Asp319 and Met341 each contribute to the UDP-N-acetyl-alpha-D-glucosamine site.

Belongs to the EPSP synthase family. MurA subfamily.

The protein resides in the cytoplasm. It catalyses the reaction phosphoenolpyruvate + UDP-N-acetyl-alpha-D-glucosamine = UDP-N-acetyl-3-O-(1-carboxyvinyl)-alpha-D-glucosamine + phosphate. The protein operates within cell wall biogenesis; peptidoglycan biosynthesis. In terms of biological role, cell wall formation. Adds enolpyruvyl to UDP-N-acetylglucosamine. The protein is UDP-N-acetylglucosamine 1-carboxyvinyltransferase of Bacteroides thetaiotaomicron (strain ATCC 29148 / DSM 2079 / JCM 5827 / CCUG 10774 / NCTC 10582 / VPI-5482 / E50).